A 311-amino-acid chain; its full sequence is Porphobilinogen deaminase (311 aa).

At Cys-242 the chain carries S-(dipyrrolylmethanemethyl)cysteine.

This sequence belongs to the HMBS family. Monomer. It depends on dipyrromethane as a cofactor.

It catalyses the reaction 4 porphobilinogen + H2O = hydroxymethylbilane + 4 NH4(+). Its pathway is porphyrin-containing compound metabolism; protoporphyrin-IX biosynthesis; coproporphyrinogen-III from 5-aminolevulinate: step 2/4. In terms of biological role, tetrapolymerization of the monopyrrole PBG into the hydroxymethylbilane pre-uroporphyrinogen in several discrete steps. The sequence is that of Porphobilinogen deaminase (hemC) from Neisseria meningitidis serogroup A / serotype 4A (strain DSM 15465 / Z2491).